The chain runs to 468 residues: MPDQVVTRFAPSPTGFLHIGGARTALFNWLYARGRGGKFLLRIEDTDRARSTPEATAAILQGMAWLGLDHDGEVISQFERAPRHAEVALELLAQGKAYKCFSTQDEIQAFREAAQAEKRSTLFRSPWRDADPATHPDAPYVIRIKAPQSGETVIRDQVQGDVTIRNDQLDDMVLLRSDGTPVYMLAVVVDDHDMGVTHVIRGDDHLNNAARQMMIYQAMGWEVPVWAHIPLIHGPDGKKLSKRHGALGAQEYQAMGYPAAGMRNYLARLGWSHGDDEFFTDAQAREWFDLDGIGKSPARFDLKKLENLSGQHIAVSDDAALRHEIEAYLAAAGLPALTQTQSGDLERAMYCLKDRARTFPELIEKAAFVLASRPISPDEKAAAALASVSDGILAELTPQLQNASWTRESLEEALNAFAEAHGTKFGKLAAPLRAALAGRAVTPSVFDMMLVLGRDESLARLRDAAHPA.

Residues 11–21 (PSPTGFLHIGG) carry the 'HIGH' region motif. Positions 239-243 (KLSKR) match the 'KMSKS' region motif. Lysine 242 serves as a coordination point for ATP.

Belongs to the class-I aminoacyl-tRNA synthetase family. Glutamate--tRNA ligase type 1 subfamily. Monomer.

The protein resides in the cytoplasm. It carries out the reaction tRNA(Glu) + L-glutamate + ATP = L-glutamyl-tRNA(Glu) + AMP + diphosphate. Its function is as follows. Catalyzes the attachment of glutamate to tRNA(Glu) in a two-step reaction: glutamate is first activated by ATP to form Glu-AMP and then transferred to the acceptor end of tRNA(Glu). In Ruegeria pomeroyi (strain ATCC 700808 / DSM 15171 / DSS-3) (Silicibacter pomeroyi), this protein is Glutamate--tRNA ligase 2.